The chain runs to 124 residues: Small ribosomal subunit protein uS12 (124 aa).

A disordered region spans residues 1 to 27; sequence MPTINQLIRKPRKSQTEKTASPALQNC. The span at 17-27 shows a compositional bias: polar residues; the sequence is EKTASPALQNC. Aspartate 89 bears the 3-methylthioaspartic acid mark.

Belongs to the universal ribosomal protein uS12 family. As to quaternary structure, part of the 30S ribosomal subunit. Contacts proteins S8 and S17. May interact with IF1 in the 30S initiation complex.

In terms of biological role, with S4 and S5 plays an important role in translational accuracy. Functionally, interacts with and stabilizes bases of the 16S rRNA that are involved in tRNA selection in the A site and with the mRNA backbone. Located at the interface of the 30S and 50S subunits, it traverses the body of the 30S subunit contacting proteins on the other side and probably holding the rRNA structure together. The combined cluster of proteins S8, S12 and S17 appears to hold together the shoulder and platform of the 30S subunit. This chain is Small ribosomal subunit protein uS12, found in Borreliella afzelii (strain PKo) (Borrelia afzelii).